The chain runs to 156 residues: SsrA-binding protein (156 aa).

The disordered stretch occupies residues 130 to 156 (KFDKRDDLKKKDAKRDIDRALRDKQKY). Positions 132-156 (DKRDDLKKKDAKRDIDRALRDKQKY) are enriched in basic and acidic residues.

It belongs to the SmpB family.

It is found in the cytoplasm. Functionally, required for rescue of stalled ribosomes mediated by trans-translation. Binds to transfer-messenger RNA (tmRNA), required for stable association of tmRNA with ribosomes. tmRNA and SmpB together mimic tRNA shape, replacing the anticodon stem-loop with SmpB. tmRNA is encoded by the ssrA gene; the 2 termini fold to resemble tRNA(Ala) and it encodes a 'tag peptide', a short internal open reading frame. During trans-translation Ala-aminoacylated tmRNA acts like a tRNA, entering the A-site of stalled ribosomes, displacing the stalled mRNA. The ribosome then switches to translate the ORF on the tmRNA; the nascent peptide is terminated with the 'tag peptide' encoded by the tmRNA and targeted for degradation. The ribosome is freed to recommence translation, which seems to be the essential function of trans-translation. In Exiguobacterium sibiricum (strain DSM 17290 / CCUG 55495 / CIP 109462 / JCM 13490 / 255-15), this protein is SsrA-binding protein.